Here is a 504-residue protein sequence, read N- to C-terminus: Probable cytochrome P450 513F1 (504 aa).

The helical transmembrane segment at 1–21 (MILSLLFLFVITLYFLIPSRI) threads the bilayer. Cys-449 is a heme binding site.

Belongs to the cytochrome P450 family. The cofactor is heme.

It localises to the membrane. This Dictyostelium discoideum (Social amoeba) protein is Probable cytochrome P450 513F1 (cyp513F1).